We begin with the raw amino-acid sequence, 803 residues long: Volume-regulated anion channel subunit LRRC8B (803 aa).

At 1 to 25 (MITLTELKCLADAQSSYHILKPWWD) the chain is on the cytoplasmic side. The chain crosses the membrane as a helical span at residues 26 to 46 (VFWYYITLIMLLVAVLAGALQ). At 47–119 (LTQSRVLCCL…YEKQLHWFAK (73 aa)) the chain is on the extracellular side. 2 disulfides stabilise this stretch: Cys55-Cys304 and Cys109-Cys289. The N-linked (GlcNAc...) asparagine glycan is linked to Asn78. Residues 120-140 (FFPYLVLLHTLIFAACSNFWL) form a helical membrane-spanning segment. Residues 141–261 (HYPSTSSRLE…DIIYRVYLKQ (121 aa)) lie on the Cytoplasmic side of the membrane. 2 positions are modified to phosphoserine: Ser186 and Ser196. The chain crosses the membrane as a helical span at residues 262-282 (IIVKVILFVLIITYVPYFLTH). The Extracellular segment spans residues 283-307 (ITLEIDCSVDVQAFTGYKRYQCVYS). Residues 308–328 (LAEIFKVLASFYVILVILYGL) form a helical membrane-spanning segment. The Cytoplasmic portion of the chain corresponds to 329-803 (TSSYSLWWML…ERLQTCLDKC (475 aa)). LRR repeat units lie at residues 464–486 (NLKE…AFLE), 488–509 (NLKI…VFHL), 511–532 (NLKE…MQLE), 539–559 (NLRT…VTDL), 562–582 (SLQK…NNLK), 586–607 (NLKS…IFSL), 609–630 (NLHE…ISFQ), 634–655 (NLSC…IGAL), 657–678 (NLEQ…LFLC), 680–701 (KLHY…IQYL), 703–724 (NLQY…LFQC), 726–747 (KLQC…VGEL), and 749–771 (NLTH…EGCQ).

It belongs to the LRRC8 family. In terms of assembly, heterohexamer; oligomerizes with other LRRC8 proteins (LRRC8A, LRRC8C, LRRC8D and/or LRRC8E) to form a heterohexamer. In vivo, the subunit composition may depend primarily on expression levels, and heterooligomeric channels containing various proportions of the different LRRC8 proteins may coexist.

The protein resides in the cell membrane. It is found in the endoplasmic reticulum membrane. It carries out the reaction chloride(in) = chloride(out). The catalysed reaction is iodide(out) = iodide(in). It catalyses the reaction taurine(out) = taurine(in). Functionally, non-essential component of the volume-regulated anion channel (VRAC, also named VSOAC channel), an anion channel required to maintain a constant cell volume in response to extracellular or intracellular osmotic changes. The VRAC channel conducts iodide better than chloride and can also conduct organic osmolytes like taurine. Channel activity requires LRRC8A plus at least one other family member (LRRC8B, LRRC8C, LRRC8D or LRRC8E); channel characteristics depend on the precise subunit composition. The polypeptide is Volume-regulated anion channel subunit LRRC8B (Homo sapiens (Human)).